The primary structure comprises 175 residues: Glycine-rich RNA-binding protein 1 (175 aa).

An RRM domain is found at 3-81 (AKVYVGNLSW…RRIRVNMANS (79 aa)). Residues 114 to 175 (GQPGGFQQPG…GYGGYNGQSQ (62 aa)) are disordered. A compositionally biased stretch (low complexity) spans 122-131 (PGGFQQQGGY). Over residues 132–141 (PQQGGYGGYQ) the composition is skewed to gly residues. Positions 142–162 (QPGFQPQQGGYGAPQQGYGAP) are enriched in low complexity. The segment covering 163 to 175 (QQGGYGGYNGQSQ) has biased composition (gly residues).

The protein belongs to the glycine-rich RNA-binding protein family. Part of large ribonucleoprotein complexes (mRNPs) containing RNA-binding proteins RRM4 and PAB1, endosome-binding protein UPA1, core scaffold protein UPA2 and associated factor GRP1.

Its subcellular location is the endosome. In terms of biological role, component of endosomal mRNA transport that regulates polarity of the infectious hyphae by transporting a broad spectrum of cargo mRNAs from the nucleus to cell poles. This is Glycine-rich RNA-binding protein 1 from Mycosarcoma maydis (Corn smut fungus).